Consider the following 341-residue polypeptide: Mytilin-2 (341 aa).

An N-terminal signal peptide occupies residues 1–24 (MFKQSYQLCLVFLLFVCFYQSVKG).

In terms of tissue distribution, component of the organic matrix of calcified shell layers like nacre and prisms.

The protein resides in the secreted. In Mytilus californianus (California mussel), this protein is Mytilin-2.